Reading from the N-terminus, the 393-residue chain is Phosphopentomutase (393 aa).

The Mn(2+) site is built by D11, D282, H287, D323, H324, and H335.

The protein belongs to the phosphopentomutase family. The cofactor is Mn(2+).

It is found in the cytoplasm. The enzyme catalyses 2-deoxy-alpha-D-ribose 1-phosphate = 2-deoxy-D-ribose 5-phosphate. It carries out the reaction alpha-D-ribose 1-phosphate = D-ribose 5-phosphate. Its pathway is carbohydrate degradation; 2-deoxy-D-ribose 1-phosphate degradation; D-glyceraldehyde 3-phosphate and acetaldehyde from 2-deoxy-alpha-D-ribose 1-phosphate: step 1/2. In terms of biological role, isomerase that catalyzes the conversion of deoxy-ribose 1-phosphate (dRib-1-P) and ribose 1-phosphate (Rib-1-P) to deoxy-ribose 5-phosphate (dRib-5-P) and ribose 5-phosphate (Rib-5-P), respectively. This is Phosphopentomutase from Caldanaerobacter subterraneus subsp. tengcongensis (strain DSM 15242 / JCM 11007 / NBRC 100824 / MB4) (Thermoanaerobacter tengcongensis).